The chain runs to 450 residues: UDP-N-acetylmuramoylalanine--D-glutamate ligase (450 aa).

119-125 (GSNGKTT) provides a ligand contact to ATP.

The protein belongs to the MurCDEF family.

The protein resides in the cytoplasm. The enzyme catalyses UDP-N-acetyl-alpha-D-muramoyl-L-alanine + D-glutamate + ATP = UDP-N-acetyl-alpha-D-muramoyl-L-alanyl-D-glutamate + ADP + phosphate + H(+). It functions in the pathway cell wall biogenesis; peptidoglycan biosynthesis. Its function is as follows. Cell wall formation. Catalyzes the addition of glutamate to the nucleotide precursor UDP-N-acetylmuramoyl-L-alanine (UMA). The sequence is that of UDP-N-acetylmuramoylalanine--D-glutamate ligase from Bacillus cereus (strain AH187).